The following is a 163-amino-acid chain: tRNA-acetylating toxin 2 (163 aa).

9 residues coordinate acetyl-CoA: L89, V91, H96, G97, Q98, G99, A101, R102, and E132. Y137 is a catalytic residue. R139 is a binding site for acetyl-CoA.

It belongs to the acetyltransferase family. GNAT subfamily. In terms of assembly, homodimer (in absence of antitoxin). Forms a complex with cognate antitoxin TacA2. Forms a 4:2 antitoxin:toxin complex with cognate antitoxin TacA2.

It carries out the reaction glycyl-tRNA(Gly) + acetyl-CoA = N-acetylglycyl-tRNA(Gly) + CoA + H(+). Its function is as follows. Toxic component of a type II toxin-antitoxin (TA) system. Acetylates tRNA and inhibits translation. Acetylates exclusively Gly in situ. Overexpression during the lag phase of a tacA2-tacT2 deletion strain leads to very small increase in persister cells in the presence of cefotaxime but no detectable growth phenotype in absence of antibiotics. Compared to a protein with a single amino acid change (TacT2 from S.enterica NCTC 13349, Glu-29 is Lys in NCTC 13349) this protein binds tRNA very poorly and acetylates tRNA very poorly. Persister cell formation is neutralized by cognate antitoxin TacA2. Neutralized only by cognate antitoxin TacA2 (A8), but not by TacA1 or TacA3. Plays a role in persister cell formation. In terms of biological role, the TacA2-TacT2 complex both represses and derepresses expression of its own operon. In Salmonella typhimurium (strain 14028s / SGSC 2262), this protein is tRNA-acetylating toxin 2.